The primary structure comprises 555 residues: Oxamate carbamoyltransferase subunit AllF (555 aa).

The protein belongs to the AllF family. The OXTCase is composed of 3 subunits, AllF, AllG and AllH. Requires Mg(2+) as cofactor.

It catalyses the reaction oxamate + carbamoyl phosphate = N-carbamoyl-2-oxoglycine + phosphate. It functions in the pathway nitrogen metabolism; (S)-allantoin degradation. Functionally, component of a carbamoyltransferase involved in the anaerobic nitrogen utilization via the assimilation of allantoin. Catalyzes the conversion of oxalurate (N-carbamoyl-2-oxoglycine) to oxamate and carbamoyl phosphate. This is Oxamate carbamoyltransferase subunit AllF from Escherichia coli (strain K12).